The chain runs to 314 residues: Homoserine O-acetyltransferase (314 aa).

The active-site Acyl-thioester intermediate is the Cys142. Lys163 and Ser192 together coordinate substrate. Residue His235 is the Proton acceptor of the active site. Residue Glu237 is part of the active site. Substrate is bound at residue Arg249.

Belongs to the MetA family.

It localises to the cytoplasm. The catalysed reaction is L-homoserine + acetyl-CoA = O-acetyl-L-homoserine + CoA. The protein operates within amino-acid biosynthesis; L-methionine biosynthesis via de novo pathway; O-acetyl-L-homoserine from L-homoserine: step 1/1. Transfers an acetyl group from acetyl-CoA to L-homoserine, forming acetyl-L-homoserine. In Desulfovibrio desulfuricans (strain ATCC 27774 / DSM 6949 / MB), this protein is Homoserine O-acetyltransferase.